Reading from the N-terminus, the 73-residue chain is Putative membrane protein insertion efficiency factor (73 aa).

It belongs to the UPF0161 family.

It localises to the cell inner membrane. In terms of biological role, could be involved in insertion of integral membrane proteins into the membrane. This is Putative membrane protein insertion efficiency factor from Neisseria meningitidis serogroup C / serotype 2a (strain ATCC 700532 / DSM 15464 / FAM18).